Reading from the N-terminus, the 352-residue chain is MADSGHSISVTFPSFHSGGKEHIIRTGCGSVSVTVCGDQEKPPLITYPDLALNHMSCFQGLFVSPESASLLLHNFCIYHINPPGHELGAASIGIDDPVPSIEDLCDQILVVLNYFRLGSVMCMGAMAGAYILTLFSIKYSERVTGLILISPICKAPSWTERFYNKLTSKTLYYYGMCDLVKELLIHRYFSKEVCGNPEIPESDMVLACRKLLDERDSVNVWRYLQAIDSRRDITEELKSLECKTIIFVGDSSPFHDEALQIAEKLGTNCSALVEVHACGSMVTQEQPHAMLIPLENFLKGFGLYRPCRYSNSPRSPLGPSSIDPELLYPEKMGLKLRPIKLRVSPQPRAHKN.

It belongs to the NDRG family. Pollen.

This Helianthus annuus (Common sunflower) protein is Pollen-specific protein SF21 (SF21).